A 68-amino-acid chain; its full sequence is Large ribosomal subunit protein uL29 (68 aa).

This sequence belongs to the universal ribosomal protein uL29 family.

This is Large ribosomal subunit protein uL29 from Limosilactobacillus fermentum (strain NBRC 3956 / LMG 18251) (Lactobacillus fermentum).